Reading from the N-terminus, the 127-residue chain is C-C motif chemokine 28 (127 aa).

Positions 1–19 are cleaved as a signal peptide; it reads MQQRGLAIVALAVCAALHA. Disulfide bonds link Cys-30–Cys-58 and Cys-31–Cys-73. An N-linked (GlcNAc...) asparagine glycan is attached at Asn-78. Residues 92 to 115 show a composition bias toward basic residues; that stretch reads KNGKGNVCHRKKHHGKRNSNRAHQ. Positions 92–127 are disordered; the sequence is KNGKGNVCHRKKHHGKRNSNRAHQGKHETYGHKTPY. Residues 116-127 are compositionally biased toward basic and acidic residues; sequence GKHETYGHKTPY.

This sequence belongs to the intercrine beta (chemokine CC) family. As to expression, preferentially expressed by epithelial cells of diverse tissues including normal and pathological colon, salivary gland, mammary gland, trachea and rectum. Also found in prostate, spleen, thyroid, psoriasis skin and in lower levels in peripheral blood leukocytes, small intestine, Peyer patches, stomach and normal skin.

The protein resides in the secreted. In terms of biological role, chemotactic activity for resting CD4, CD8 T-cells and eosinophils. Binds to CCR3 and CCR10 and induces calcium mobilization in a dose-dependent manner. This chain is C-C motif chemokine 28 (CCL28), found in Homo sapiens (Human).